Consider the following 497-residue polypeptide: Cytoplasmic dynein 1 light intermediate chain 2 (497 aa).

G61–T68 is an ATP binding site. Disordered regions lie at residues P187–D206, Q366–N408, L423–C461, and Q474–A497. A phosphoserine mark is found at S194, S369, and S377. The residue at position 383 (R383) is an Omega-N-methylarginine. Over residues L423–K444 the composition is skewed to polar residues. T427 carries the phosphothreonine modification. Phosphoserine is present on residues S429 and S432. Over residues E476–D485 the composition is skewed to basic and acidic residues. The segment covering M487–A497 has biased composition (polar residues).

Belongs to the dynein light intermediate chain family. In terms of assembly, homodimer. The cytoplasmic dynein 1 complex consists of two catalytic heavy chains (HCs) and a number of non-catalytic subunits presented by intermediate chains (ICs), light intermediate chains (LICs) and light chains (LCs); the composition seems to vary in respect to the IC, LIC and LC composition. The heavy chain homodimer serves as a scaffold for the probable homodimeric assembly of the respective non-catalytic subunits. The ICs and LICs bind directly to the HC dimer and the LCs assemble on the IC dimer. Self-associates. Interacts with DYNC1H1; DYNC1LI1 and DYNC1LI2 bind mutually exclusive to DYNC1H1. In terms of tissue distribution, ubiquitous.

It is found in the cytoplasm. Its subcellular location is the cytoskeleton. Functionally, acts as one of several non-catalytic accessory components of the cytoplasmic dynein 1 complex that are thought to be involved in linking dynein to cargos and to adapter proteins that regulate dynein function. Cytoplasmic dynein 1 acts as a motor for the intracellular retrograde motility of vesicles and organelles along microtubules. May play a role in binding dynein to membranous organelles or chromosomes. In Rattus norvegicus (Rat), this protein is Cytoplasmic dynein 1 light intermediate chain 2 (Dync1li2).